The sequence spans 185 residues: Large ribosomal subunit protein uL5 (185 aa).

The protein belongs to the universal ribosomal protein uL5 family. In terms of assembly, part of the 50S ribosomal subunit; part of the 5S rRNA/L5/L18/L25 subcomplex. Contacts the 5S rRNA and the P site tRNA. Forms a bridge to the 30S subunit in the 70S ribosome.

Its function is as follows. This is one of the proteins that bind and probably mediate the attachment of the 5S RNA into the large ribosomal subunit, where it forms part of the central protuberance. In the 70S ribosome it contacts protein S13 of the 30S subunit (bridge B1b), connecting the 2 subunits; this bridge is implicated in subunit movement. Contacts the P site tRNA; the 5S rRNA and some of its associated proteins might help stabilize positioning of ribosome-bound tRNAs. This is Large ribosomal subunit protein uL5 from Streptomyces griseus subsp. griseus (strain JCM 4626 / CBS 651.72 / NBRC 13350 / KCC S-0626 / ISP 5235).